The sequence spans 244 residues: Leucyl/phenylalanyl-tRNA--protein transferase (244 aa).

The segment at 1–22 is disordered; sequence MHSQPYLLSPAPNNTPFPPAEH.

The protein belongs to the L/F-transferase family.

Its subcellular location is the cytoplasm. The enzyme catalyses N-terminal L-lysyl-[protein] + L-leucyl-tRNA(Leu) = N-terminal L-leucyl-L-lysyl-[protein] + tRNA(Leu) + H(+). It catalyses the reaction N-terminal L-arginyl-[protein] + L-leucyl-tRNA(Leu) = N-terminal L-leucyl-L-arginyl-[protein] + tRNA(Leu) + H(+). The catalysed reaction is L-phenylalanyl-tRNA(Phe) + an N-terminal L-alpha-aminoacyl-[protein] = an N-terminal L-phenylalanyl-L-alpha-aminoacyl-[protein] + tRNA(Phe). In terms of biological role, functions in the N-end rule pathway of protein degradation where it conjugates Leu, Phe and, less efficiently, Met from aminoacyl-tRNAs to the N-termini of proteins containing an N-terminal arginine or lysine. This is Leucyl/phenylalanyl-tRNA--protein transferase from Xylella fastidiosa (strain M12).